A 321-amino-acid chain; its full sequence is Lipoyl synthase (321 aa).

The [4Fe-4S] cluster site is built by Cys-68, Cys-73, Cys-79, Cys-94, Cys-98, Cys-101, and Ser-308. Residues 80–297 enclose the Radical SAM core domain; sequence FNHGTATFMI…KVLADELGFT (218 aa).

This sequence belongs to the radical SAM superfamily. Lipoyl synthase family. Requires [4Fe-4S] cluster as cofactor.

The protein localises to the cytoplasm. The enzyme catalyses [[Fe-S] cluster scaffold protein carrying a second [4Fe-4S](2+) cluster] + N(6)-octanoyl-L-lysyl-[protein] + 2 oxidized [2Fe-2S]-[ferredoxin] + 2 S-adenosyl-L-methionine + 4 H(+) = [[Fe-S] cluster scaffold protein] + N(6)-[(R)-dihydrolipoyl]-L-lysyl-[protein] + 4 Fe(3+) + 2 hydrogen sulfide + 2 5'-deoxyadenosine + 2 L-methionine + 2 reduced [2Fe-2S]-[ferredoxin]. It participates in protein modification; protein lipoylation via endogenous pathway; protein N(6)-(lipoyl)lysine from octanoyl-[acyl-carrier-protein]: step 2/2. In terms of biological role, catalyzes the radical-mediated insertion of two sulfur atoms into the C-6 and C-8 positions of the octanoyl moiety bound to the lipoyl domains of lipoate-dependent enzymes, thereby converting the octanoylated domains into lipoylated derivatives. The sequence is that of Lipoyl synthase from Shewanella denitrificans (strain OS217 / ATCC BAA-1090 / DSM 15013).